Reading from the N-terminus, the 79-residue chain is Submaxillary gland androgen-regulated protein 3B (79 aa).

Positions 1 to 22 (MKSLTWILGLWALAACFTPGES) are cleaved as a signal peptide. A disordered region spans residues 19–79 (PGESQRGPRG…GIFPPPPPQP (61 aa)). Residue glutamine 23 is modified to Pyrrolidone carboxylic acid. The segment covering 28–79 (GPYPPGPLAPPQPFGPGFVPPPPPPPYGPGRIPPPPPAPYGPGIFPPPPPQP) has biased composition (pro residues).

Belongs to the PROL1/PROL3 family. Post-translationally, P-A and D1A are probably degradation products of P-B. As to expression, secreted into saliva by submaxillary gland. Not expressed in heart, brain, lung, liver, skeletal muscle, Kidney, pancreas or placenta.

It is found in the secreted. The polypeptide is Submaxillary gland androgen-regulated protein 3B (SMR3B) (Homo sapiens (Human)).